The primary structure comprises 221 residues: uncharacterized protein (221 aa).

The Extracellular portion of the chain corresponds to 1-45; the sequence is MYAPIRSPITELNESTPSSIPVATSYATCSASFAKLVALLVDDMA. The chain crosses the membrane as a helical span at residues 46–66; that stretch reads GLSIVLSEIYIYFKLLFLIVI. Topologically, residues 67–221 are cytoplasmic; that stretch reads TESIQNKLED…KYIVVIKVEQ (155 aa).

It is found in the host membrane. This is an uncharacterized protein from Acidianus filamentous virus 1 (isolate United States/Yellowstone) (AFV-1).